Here is a 137-residue protein sequence, read N- to C-terminus: Basic phospholipase A2 homolog W6D49 (137 aa).

Positions 1–16 (MRTLWILAVLLVSVDG) are cleaved as a signal peptide. 7 cysteine pairs are disulfide-bonded: cysteine 42–cysteine 131, cysteine 44–cysteine 60, cysteine 59–cysteine 111, cysteine 65–cysteine 137, cysteine 66–cysteine 104, cysteine 73–cysteine 97, and cysteine 91–cysteine 102. The segment at 121 to 133 (KKQQFNTGIFCSK) is important for membrane-damaging activities in eukaryotes and bacteria; heparin-binding.

Monomer. As to expression, expressed by the venom gland.

It localises to the secreted. With respect to regulation, heparin reduces its edema-inducing activity. Its function is as follows. Snake venom phospholipase A2 homolog that lacks enzymatic activity. Shows myotoxin activities and displays edema-inducing activities. A model of myotoxic mechanism has been proposed: an apo Lys49-PLA2 is activated by the entrance of a hydrophobic molecule (e.g. fatty acid) at the hydrophobic channel of the protein leading to a reorientation of a monomer. This reorientation causes a transition between 'inactive' to 'active' states, causing alignment of C-terminal and membrane-docking sites (MDoS) side-by-side and putting the membrane-disruption sites (MDiS) in the same plane, exposed to solvent and in a symmetric position for both monomers. The MDoS region stabilizes the toxin on membrane by the interaction of charged residues with phospholipid head groups. Subsequently, the MDiS region destabilizes the membrane with penetration of hydrophobic residues. This insertion causes a disorganization of the membrane, allowing an uncontrolled influx of ions (i.e. calcium and sodium), and eventually triggering irreversible intracellular alterations and cell death. The sequence is that of Basic phospholipase A2 homolog W6D49 from Calloselasma rhodostoma (Malayan pit viper).